We begin with the raw amino-acid sequence, 564 residues long: Probable cysteine--tRNA ligase, mitochondrial (564 aa).

Residue Cys-78 participates in Zn(2+) binding. Position 79 (Gly-79) interacts with L-cysteine. Residues 80-90 (PTVYDHAHLGH) carry the 'HIGH' region motif. Thr-119 contributes to the L-cysteine binding site. The short motif at 124–127 (KIIK) is the 'KIIK' region element. Zn(2+)-binding residues include Cys-257, His-282, and Glu-286. Residue His-282 participates in L-cysteine binding. A 'KMSKS' region motif is present at residues 317–321 (KMSKS). Lys-320 is a binding site for ATP.

The protein belongs to the class-I aminoacyl-tRNA synthetase family. The cofactor is Zn(2+).

It is found in the mitochondrion. The catalysed reaction is tRNA(Cys) + L-cysteine + ATP = L-cysteinyl-tRNA(Cys) + AMP + diphosphate. It carries out the reaction 2 L-cysteine = S-sulfanyl-L-cysteine + L-alanine. It catalyses the reaction S-sulfanyl-L-cysteine + L-cysteine = S-disulfanyl-L-cysteine + L-alanine. The enzyme catalyses S-sulfanyl-L-cysteine + tRNA(Cys) + ATP = (S)-sulfanyl-L-cysteinyl-tRNA(Cys) + AMP + diphosphate. The catalysed reaction is S-disulfanyl-L-cysteine + tRNA(Cys) + ATP = (S)-disulfanyl-L-cysteinyl-tRNA(Cys) + AMP + diphosphate. In terms of biological role, mitochondrial cysteine-specific aminoacyl-tRNA synthetase that catalyzes the ATP-dependent ligation of cysteine to tRNA(Cys). Its function is as follows. In addition to its role as an aminoacyl-tRNA synthetase, has also cysteine persulfide synthase activity. Produces reactive persulfide species such as cysteine persulfide (CysSSH) from substrate cysteine and mediate direct incorporation of CysSSH into proteins during translations, resulting in protein persulfides and polysulfides. CysSSHs behave as potent antioxidants and cellular protectants. This chain is Probable cysteine--tRNA ligase, mitochondrial, found in Homo sapiens (Human).